The chain runs to 326 residues: Aquaporin-3 (326 aa).

The next 2 membrane-spanning stretches (helical) occupy residues 24–44 and 64–84; these read LAEF…IITA and LAFG…GISG. The NPA 1 motif lies at 88-90; sequence NPA. Residues 107–127 form a helical membrane-spanning segment; the sequence is LVYIFMQYMGAFFAASILYAV. The N-linked (GlcNAc...) asparagine glycan is linked to Asn-146. 2 consecutive transmembrane segments (helical) span residues 166–186 and 196–216; these read IFDA…IIDP and IPLY…YNAG. The NPA 2 motif lies at 220–222; that stretch reads NPA. The chain crosses the membrane as a helical span at residues 247-267; that stretch reads LWWLVPVIGPHVGGLLGGVTY. A glycan (N-linked (GlcNAc...) asparagine) is linked at Asn-294.

Belongs to the MIP/aquaporin (TC 1.A.8) family.

The protein resides in the cell membrane. Aquaglyceroporin that may modulate the water content and osmolytes during anhydrobiosis. This Milnesium tardigradum (Water bear) protein is Aquaporin-3.